A 183-amino-acid chain; its full sequence is 16 kDa gamma-zein (183 aa).

Positions 1–19 (MKVLIVALALLALAASAAS) are cleaved as a signal peptide.

Interacts with OP10 (via N-terminus).

The protein resides in the vacuole. Its subcellular location is the aleurone grain. Functionally, zeins are major seed storage proteins. The chain is 16 kDa gamma-zein from Zea mays (Maize).